Consider the following 289-residue polypeptide: Pantothenate synthetase (289 aa).

Residue 33–40 (MGNLHDGH) participates in ATP binding. The Proton donor role is filled by H40. (R)-pantoate is bound at residue Q64. Beta-alanine is bound at residue Q64. ATP is bound at residue 155-158 (GKKD). (R)-pantoate is bound at residue Q161. ATP is bound by residues A184 and 192 to 195 (LSSR).

It belongs to the pantothenate synthetase family. Homodimer.

The protein resides in the cytoplasm. It carries out the reaction (R)-pantoate + beta-alanine + ATP = (R)-pantothenate + AMP + diphosphate + H(+). It participates in cofactor biosynthesis; (R)-pantothenate biosynthesis; (R)-pantothenate from (R)-pantoate and beta-alanine: step 1/1. Its function is as follows. Catalyzes the condensation of pantoate with beta-alanine in an ATP-dependent reaction via a pantoyl-adenylate intermediate. This Acidovorax sp. (strain JS42) protein is Pantothenate synthetase.